Here is a 227-residue protein sequence, read N- to C-terminus: Mitochondrial inner membrane protease ATP23 (227 aa).

Residue His124 participates in a divalent metal cation binding. Glu125 is an active-site residue. His128 contributes to the a divalent metal cation binding site.

The protein belongs to the peptidase M76 family. Interacts with ATP6.

It localises to the mitochondrion inner membrane. Its function is as follows. Has a dual role in the assembly of mitochondrial ATPase. Acts as a protease that removes the N-terminal 10 residues of mitochondrial ATPase CF(0) subunit 6 (ATP6) at the intermembrane space side. Also involved in the correct assembly of the membrane-embedded ATPase CF(0) particle, probably mediating association of ATP6 with the subunit 9 ring. The protein is Mitochondrial inner membrane protease ATP23 (ATP23) of Saccharomyces cerevisiae (strain YJM789) (Baker's yeast).